We begin with the raw amino-acid sequence, 66 residues long: Large ribosomal subunit protein bL31 (66 aa).

Zn(2+) is bound by residues cysteine 16, cysteine 18, cysteine 36, and cysteine 39.

This sequence belongs to the bacterial ribosomal protein bL31 family. Type A subfamily. In terms of assembly, part of the 50S ribosomal subunit. Zn(2+) serves as cofactor.

Binds the 23S rRNA. The protein is Large ribosomal subunit protein bL31 of Thermodesulfovibrio yellowstonii (strain ATCC 51303 / DSM 11347 / YP87).